Reading from the N-terminus, the 550-residue chain is Tyrosine-protein phosphatase 1 (550 aa).

A Tyrosine-protein phosphatase domain is found at 260–539; it reads LYQKFLRLQS…KYVYDLIDSL (280 aa). Ser318 and Ser320 each carry phosphoserine. Cys470 (phosphocysteine intermediate) is an active-site residue.

This sequence belongs to the protein-tyrosine phosphatase family. Non-receptor class subfamily.

It localises to the cytoplasm. The enzyme catalyses O-phospho-L-tyrosyl-[protein] + H2O = L-tyrosyl-[protein] + phosphate. Functionally, plays a role in inhibiting the onset of mitosis. Dephosphorylates sty1/spc1 and wis1/spc2/sty2. The protein is Tyrosine-protein phosphatase 1 (pyp1) of Schizosaccharomyces pombe (strain 972 / ATCC 24843) (Fission yeast).